The sequence spans 89 residues: Small ribosomal subunit protein uS15 (89 aa).

This sequence belongs to the universal ribosomal protein uS15 family. In terms of assembly, part of the 30S ribosomal subunit. Forms a bridge to the 50S subunit in the 70S ribosome, contacting the 23S rRNA.

Functionally, one of the primary rRNA binding proteins, it binds directly to 16S rRNA where it helps nucleate assembly of the platform of the 30S subunit by binding and bridging several RNA helices of the 16S rRNA. In terms of biological role, forms an intersubunit bridge (bridge B4) with the 23S rRNA of the 50S subunit in the ribosome. The polypeptide is Small ribosomal subunit protein uS15 (Neisseria gonorrhoeae (strain ATCC 700825 / FA 1090)).